The sequence spans 328 residues: DNA-directed RNA polymerase subunit alpha (328 aa).

Residues 1–231 form an alpha N-terminal domain (alpha-NTD) region; that stretch reads MIYQMQMPAK…EHVTFFANFS (231 aa). Residues 247–328 form an alpha C-terminal domain (alpha-CTD) region; the sequence is DEFETMRRLL…MDITRYQMKG (82 aa).

This sequence belongs to the RNA polymerase alpha chain family. In terms of assembly, homodimer. The RNAP catalytic core consists of 2 alpha, 1 beta, 1 beta' and 1 omega subunit. When a sigma factor is associated with the core the holoenzyme is formed, which can initiate transcription.

It catalyses the reaction RNA(n) + a ribonucleoside 5'-triphosphate = RNA(n+1) + diphosphate. Functionally, DNA-dependent RNA polymerase catalyzes the transcription of DNA into RNA using the four ribonucleoside triphosphates as substrates. In Chlorobium luteolum (strain DSM 273 / BCRC 81028 / 2530) (Pelodictyon luteolum), this protein is DNA-directed RNA polymerase subunit alpha.